The chain runs to 286 residues: Bifunctional protein FolD 2 (286 aa).

Residues Gly165–Gly167, Thr192, and Val233 contribute to the NADP(+) site.

Belongs to the tetrahydrofolate dehydrogenase/cyclohydrolase family. In terms of assembly, homodimer.

The catalysed reaction is (6R)-5,10-methylene-5,6,7,8-tetrahydrofolate + NADP(+) = (6R)-5,10-methenyltetrahydrofolate + NADPH. It catalyses the reaction (6R)-5,10-methenyltetrahydrofolate + H2O = (6R)-10-formyltetrahydrofolate + H(+). The protein operates within one-carbon metabolism; tetrahydrofolate interconversion. Functionally, catalyzes the oxidation of 5,10-methylenetetrahydrofolate to 5,10-methenyltetrahydrofolate and then the hydrolysis of 5,10-methenyltetrahydrofolate to 10-formyltetrahydrofolate. This chain is Bifunctional protein FolD 2, found in Rhodococcus jostii (strain RHA1).